We begin with the raw amino-acid sequence, 231 residues long: tRNA (guanine-N(7)-)-methyltransferase (231 aa).

Residues Asp57, Glu82, Asp109, and Asp132 each coordinate S-adenosyl-L-methionine. Asp132 is an active-site residue. Substrate-binding positions include Lys136, Asp168, and 205–208 (TKFE). Residues 194–214 (AFVPPPPPRPQTKFERRGLRK) are disordered.

This sequence belongs to the class I-like SAM-binding methyltransferase superfamily. TrmB family.

The enzyme catalyses guanosine(46) in tRNA + S-adenosyl-L-methionine = N(7)-methylguanosine(46) in tRNA + S-adenosyl-L-homocysteine. It participates in tRNA modification; N(7)-methylguanine-tRNA biosynthesis. In terms of biological role, catalyzes the formation of N(7)-methylguanine at position 46 (m7G46) in tRNA. In Halorhodospira halophila (strain DSM 244 / SL1) (Ectothiorhodospira halophila (strain DSM 244 / SL1)), this protein is tRNA (guanine-N(7)-)-methyltransferase.